We begin with the raw amino-acid sequence, 347 residues long: Protein-arginine kinase (347 aa).

Residues 22-247 (LVVSTRIRLA…EQVIQAERHA (226 aa)) enclose the Phosphagen kinase C-terminal domain. ATP-binding positions include 25 to 29 (STRIR), His85, Arg118, 169 to 173 (RASVM), and 200 to 205 (RGRYGE). The short motif at 330-335 (RDRERA) is the RDXXRA motif of the pArg binding pocket involved in allosteric regulation element.

Belongs to the ATP:guanido phosphotransferase family.

The catalysed reaction is L-arginyl-[protein] + ATP = N(omega)-phospho-L-arginyl-[protein] + ADP + H(+). Its activity is regulated as follows. Appears to be allosterically activated by the binding of pArg-containing polypeptides to the pArg-binding pocket localized in the C-terminal domain of McsB. Functionally, catalyzes the specific phosphorylation of arginine residues in proteins. The protein is Protein-arginine kinase of Exiguobacterium sp. (strain ATCC BAA-1283 / AT1b).